Here is a 306-residue protein sequence, read N- to C-terminus: 2-phosphoglycerate kinase (306 aa).

Residues Met1 to Glu90 enclose the ATP-cone domain.

It belongs to the 2-phosphoglycerate kinase family. It depends on a divalent metal cation as a cofactor.

It carries out the reaction (2R)-2-phosphoglycerate + ATP = (2R)-2,3-bisphosphoglycerate + ADP + H(+). It participates in thermoadapter biosynthesis; cyclic 2,3-diphosphoglycerate biosynthesis; cyclic 2,3-diphosphoglycerate from 2-phospho-D-glycerate: step 1/2. Catalyzes the phosphorylation of 2-phosphoglycerate to 2,3-diphosphoglycerate. Involved in the biosynthesis of cyclic 2,3-bisphosphoglycerate, a thermoprotectant. The chain is 2-phosphoglycerate kinase from Methanothermobacter thermautotrophicus (strain ATCC 29096 / DSM 1053 / JCM 10044 / NBRC 100330 / Delta H) (Methanobacterium thermoautotrophicum).